The chain runs to 246 residues: Chloroplastic group IIB intron splicing facilitator CRS2-A, chloroplastic (246 aa).

Residues Met-1–Arg-34 constitute a chloroplast transit peptide. Tyr-64 is a tRNA binding site. His-69 functions as the Proton acceptor in the catalytic mechanism. Positions 114, 116, and 162 each coordinate tRNA.

This sequence belongs to the PTH family. CRS2 subfamily. In terms of assembly, part of large ribonucleo-protein complexes that include group IIB introns and either CAF1 or CAF2.

It is found in the plastid. The protein resides in the chloroplast stroma. In terms of biological role, required for the splicing of group IIB introns in chloroplasts. The chain is Chloroplastic group IIB intron splicing facilitator CRS2-A, chloroplastic (CRS2A) from Arabidopsis thaliana (Mouse-ear cress).